A 307-amino-acid chain; its full sequence is Nucleotide-binding protein ACP_0619 (307 aa).

Positions 1–14 (MPAPEPTRRAKKDA) are enriched in basic and acidic residues. The tract at residues 1–23 (MPAPEPTRRAKKDASASPSPAHP) is disordered. 33-40 (GLSGAGKG) lines the ATP pocket. 83–86 (DVRE) is a GTP binding site.

This sequence belongs to the RapZ-like family.

Functionally, displays ATPase and GTPase activities. The polypeptide is Nucleotide-binding protein ACP_0619 (Acidobacterium capsulatum (strain ATCC 51196 / DSM 11244 / BCRC 80197 / JCM 7670 / NBRC 15755 / NCIMB 13165 / 161)).